The primary structure comprises 66 residues: ATP synthase subunit c (66 aa).

Helical transmembrane passes span 3-23 and 45-65; these read LTFF…GMLM and IMGI…SFVI.

The protein belongs to the ATPase C chain family. As to quaternary structure, F-type ATPases have 2 components, F(1) - the catalytic core - and F(0) - the membrane proton channel. F(1) has five subunits: alpha(3), beta(3), gamma(1), delta(1), epsilon(1). F(0) has three main subunits: a(1), b(2) and c(10-14). The alpha and beta chains form an alternating ring which encloses part of the gamma chain. F(1) is attached to F(0) by a central stalk formed by the gamma and epsilon chains, while a peripheral stalk is formed by the delta and b chains.

Its subcellular location is the cell membrane. F(1)F(0) ATP synthase produces ATP from ADP in the presence of a proton or sodium gradient. F-type ATPases consist of two structural domains, F(1) containing the extramembraneous catalytic core and F(0) containing the membrane proton channel, linked together by a central stalk and a peripheral stalk. During catalysis, ATP synthesis in the catalytic domain of F(1) is coupled via a rotary mechanism of the central stalk subunits to proton translocation. In terms of biological role, key component of the F(0) channel; it plays a direct role in translocation across the membrane. A homomeric c-ring of between 10-14 subunits forms the central stalk rotor element with the F(1) delta and epsilon subunits. The chain is ATP synthase subunit c (atpE) from Streptococcus oralis.